The sequence spans 363 residues: 3-dehydroquinate synthase (363 aa).

NAD(+) contacts are provided by residues glycine 109 to aspartate 113, threonine 133 to threonine 134, lysine 146, and lysine 155. Positions 188, 251, and 267 each coordinate Zn(2+).

This sequence belongs to the sugar phosphate cyclases superfamily. Dehydroquinate synthase family. The cofactor is NAD(+). Requires Co(2+) as cofactor. Zn(2+) serves as cofactor.

The protein localises to the cytoplasm. It carries out the reaction 7-phospho-2-dehydro-3-deoxy-D-arabino-heptonate = 3-dehydroquinate + phosphate. It participates in metabolic intermediate biosynthesis; chorismate biosynthesis; chorismate from D-erythrose 4-phosphate and phosphoenolpyruvate: step 2/7. Catalyzes the conversion of 3-deoxy-D-arabino-heptulosonate 7-phosphate (DAHP) to dehydroquinate (DHQ). This Streptomyces avermitilis (strain ATCC 31267 / DSM 46492 / JCM 5070 / NBRC 14893 / NCIMB 12804 / NRRL 8165 / MA-4680) protein is 3-dehydroquinate synthase.